A 344-amino-acid polypeptide reads, in one-letter code: N-acetyl-gamma-glutamyl-phosphate reductase (344 aa).

C149 is a catalytic residue.

The protein belongs to the NAGSA dehydrogenase family. Type 1 subfamily.

The protein resides in the cytoplasm. The enzyme catalyses N-acetyl-L-glutamate 5-semialdehyde + phosphate + NADP(+) = N-acetyl-L-glutamyl 5-phosphate + NADPH + H(+). It participates in amino-acid biosynthesis; L-arginine biosynthesis; N(2)-acetyl-L-ornithine from L-glutamate: step 3/4. Its function is as follows. Catalyzes the NADPH-dependent reduction of N-acetyl-5-glutamyl phosphate to yield N-acetyl-L-glutamate 5-semialdehyde. This Halorhodospira halophila (strain DSM 244 / SL1) (Ectothiorhodospira halophila (strain DSM 244 / SL1)) protein is N-acetyl-gamma-glutamyl-phosphate reductase.